A 153-amino-acid polypeptide reads, in one-letter code: Sperm surface protein Sp17 (153 aa).

The segment at 74-117 (FKVPSGATESKEAPPEKSEPEKETPQEVVKEQETQVSFVEEVST) is disordered. A compositionally biased stretch (basic and acidic residues) spans 82 to 106 (ESKEAPPEKSEPEKETPQEVVKEQE). One can recognise an IQ domain in the interval 122-151 (AAAAAVKIQAAFRGHKARKEVKIMKESSIE).

In terms of assembly, homodimer. May interact with ROPN1. Testis- and sperm-specific.

It localises to the membrane. In terms of biological role, sperm surface zona pellucida binding protein. Helps to bind spermatozoa to the zona pellucida with high affinity. Might function in binding zona pellucida and carbohydrates. The polypeptide is Sperm surface protein Sp17 (SPA17) (Notamacropus eugenii (Tammar wallaby)).